The primary structure comprises 176 residues: Protein MAL2 (176 aa).

Over 1-34 (MSAGGAPVPPPPNPAMSFPAPRVTLPAGPDILRT) the chain is Cytoplasmic. An MARVEL domain is found at 31 to 175 (ILRTYSGAFV…SLGLALRRWR (145 aa)). Residues 35-55 (YSGAFVCLEIVFGGLVWILVA) form a helical membrane-spanning segment. Residues 56–66 (SSNVPLPLLQG) lie on the Lumenal side of the membrane. A helical transmembrane segment spans residues 67–87 (WVMFVSVTAFVCSLLFLGVFL). Over 88-102 (SGVVTQINANWNFLD) the chain is Cytoplasmic. Residues 103 to 123 (FAYHFTVFVFYFGAFLLEAAT) traverse the membrane as a helical segment. The Lumenal segment spans residues 124–149 (TSLHDLRCNRTMTVQPLLSDNQYNIN). Residue Asn132 is glycosylated (N-linked (GlcNAc...) asparagine). A helical transmembrane segment spans residues 150 to 170 (VAATIFAFVTTACYGCSLGLA). Residues 171–176 (LRRWRP) lie on the Cytoplasmic side of the membrane.

Belongs to the MAL family. In terms of assembly, interacts with TPD52L2.

Its subcellular location is the cell membrane. The protein resides in the apical cell membrane. Functionally, member of the machinery of polarized transport. Required for the indirect transcytotic route at the step of the egress of the transcytosing cargo from perinuclear endosomes in order for it to travel to the apical surface via a raft-dependent pathway. This is Protein MAL2 (MAL2) from Bos taurus (Bovine).